Consider the following 100-residue polypeptide: Large ribosomal subunit protein uL23 (100 aa).

It belongs to the universal ribosomal protein uL23 family. Part of the 50S ribosomal subunit. Contacts protein L29, and trigger factor when it is bound to the ribosome.

Its function is as follows. One of the early assembly proteins it binds 23S rRNA. One of the proteins that surrounds the polypeptide exit tunnel on the outside of the ribosome. Forms the main docking site for trigger factor binding to the ribosome. This chain is Large ribosomal subunit protein uL23, found in Synechococcus sp. (strain WH7803).